A 323-amino-acid polypeptide reads, in one-letter code: Probable cell division protein WhiA (323 aa).

The H-T-H motif DNA-binding region spans 275–309 (TLKELGEMLTTGQVSKSGINHRLRKLDQIAERLRS).

This sequence belongs to the WhiA family.

In terms of biological role, involved in cell division and chromosome segregation. The chain is Probable cell division protein WhiA from Listeria innocua serovar 6a (strain ATCC BAA-680 / CLIP 11262).